A 191-amino-acid chain; its full sequence is uncharacterized protein (191 aa).

The next 6 membrane-spanning stretches (helical) occupy residues 4-24 (IYRQ…VLIF), 26-46 (KQLI…YFLC), 68-88 (GKGA…IDDI), 90-110 (AVFF…IIGI), 135-155 (LILY…SAFI), and 168-188 (LYLP…CSLM).

Its subcellular location is the cell membrane. This is an uncharacterized protein from Methanocaldococcus jannaschii (strain ATCC 43067 / DSM 2661 / JAL-1 / JCM 10045 / NBRC 100440) (Methanococcus jannaschii).